Reading from the N-terminus, the 329-residue chain is Sex comb on midleg-like protein 1 (329 aa).

2 positions are modified to phosphoserine: Ser138 and Ser238. The disordered stretch occupies residues 138-157 (SPTLPVSRRENNSPSNLPRP). An SAM domain is found at 258 to 325 (WSVEAVVLFL…YYIDRLKQGK (68 aa)).

This sequence belongs to the SCM family.

It localises to the nucleus. Putative Polycomb group (PcG) protein. PcG proteins act by forming multiprotein complexes, which are required to maintain the transcriptionally repressive state of homeotic genes throughout development. May be involved in spermatogenesis during sexual maturation. The polypeptide is Sex comb on midleg-like protein 1 (SCML1) (Pan troglodytes (Chimpanzee)).